Here is a 307-residue protein sequence, read N- to C-terminus: UDP-N-acetylenolpyruvoylglucosamine reductase (307 aa).

Positions 33 to 198 constitute an FAD-binding PCMH-type domain; it reads KVGGPADIFV…LNATFALQKG (166 aa). The active site involves Arg177. Ser227 functions as the Proton donor in the catalytic mechanism. Glu297 is an active-site residue.

Belongs to the MurB family. It depends on FAD as a cofactor.

The protein localises to the cytoplasm. It catalyses the reaction UDP-N-acetyl-alpha-D-muramate + NADP(+) = UDP-N-acetyl-3-O-(1-carboxyvinyl)-alpha-D-glucosamine + NADPH + H(+). It participates in cell wall biogenesis; peptidoglycan biosynthesis. Its function is as follows. Cell wall formation. The protein is UDP-N-acetylenolpyruvoylglucosamine reductase of Clostridium novyi (strain NT).